We begin with the raw amino-acid sequence, 385 residues long: Succinate--CoA ligase [ADP-forming] subunit beta (385 aa).

Residues 9-241 form the ATP-grasp domain; sequence KELLRDFGIN…IDEEEPSELE (233 aa). Residues K46, 53–55, E99, T102, and E107 contribute to the ATP site; that span reads GRG. 2 residues coordinate Mg(2+): N196 and D210. Substrate contacts are provided by residues N261 and 318–320; that span reads GIV.

The protein belongs to the succinate/malate CoA ligase beta subunit family. As to quaternary structure, heterotetramer of two alpha and two beta subunits. Mg(2+) serves as cofactor.

The enzyme catalyses succinate + ATP + CoA = succinyl-CoA + ADP + phosphate. It catalyses the reaction GTP + succinate + CoA = succinyl-CoA + GDP + phosphate. It functions in the pathway carbohydrate metabolism; tricarboxylic acid cycle; succinate from succinyl-CoA (ligase route): step 1/1. Its function is as follows. Succinyl-CoA synthetase functions in the citric acid cycle (TCA), coupling the hydrolysis of succinyl-CoA to the synthesis of either ATP or GTP and thus represents the only step of substrate-level phosphorylation in the TCA. The beta subunit provides nucleotide specificity of the enzyme and binds the substrate succinate, while the binding sites for coenzyme A and phosphate are found in the alpha subunit. In Campylobacter fetus subsp. fetus (strain 82-40), this protein is Succinate--CoA ligase [ADP-forming] subunit beta.